We begin with the raw amino-acid sequence, 164 residues long: CASP-like protein 1C1 (164 aa).

The Cytoplasmic portion of the chain corresponds to 1–7 (MVKLTKR). Residues 8-28 (IGGLVLRLAAFGAALAALIVM) traverse the membrane as a helical segment. At 29 to 51 (ITSRERASFLAISLEAKYTDMAA) the chain is on the extracellular side. Residues 52 to 72 (FKYFVIANAVVSVYSFLVLFL) form a helical membrane-spanning segment. At 73–80 (PKESLLWK) the chain is on the cytoplasmic side. A helical transmembrane segment spans residues 81–101 (FVVVLDLVMTMLLTSSLSAAL). At 102–129 (AVAQVGKKGNANAGWLPICGQVPKFCDQ) the chain is on the extracellular side. Residues 130–150 (ITGALIAGFVALVLYVLLLLY) traverse the membrane as a helical segment. The Cytoplasmic portion of the chain corresponds to 151-164 (SLHAVVDPFLLQKS).

The protein belongs to the Casparian strip membrane proteins (CASP) family. Homodimer and heterodimers. As to expression, expressed in the stele of the root.

The protein resides in the cell membrane. This chain is CASP-like protein 1C1, found in Arabidopsis thaliana (Mouse-ear cress).